The following is a 157-amino-acid chain: Phosphopantetheine adenylyltransferase (157 aa).

Belongs to the eukaryotic CoaD family.

The protein localises to the cytoplasm. It carries out the reaction (R)-4'-phosphopantetheine + ATP + H(+) = 3'-dephospho-CoA + diphosphate. It participates in cofactor biosynthesis; coenzyme A biosynthesis. Its function is as follows. Reversibly transfers an adenylyl group from ATP to 4'-phosphopantetheine, yielding dephospho-CoA (dPCoA) and pyrophosphate. This chain is Phosphopantetheine adenylyltransferase, found in Methanopyrus kandleri (strain AV19 / DSM 6324 / JCM 9639 / NBRC 100938).